A 197-amino-acid polypeptide reads, in one-letter code: Recombination protein RecR (197 aa).

The C4-type zinc finger occupies 57–72 (CSICFAITEDDPCAIC). Residues 79-174 (GTICVVENSQ…RISRLAHGIP (96 aa)) form the Toprim domain.

The protein belongs to the RecR family.

Functionally, may play a role in DNA repair. It seems to be involved in an RecBC-independent recombinational process of DNA repair. It may act with RecF and RecO. In Pelobacter propionicus (strain DSM 2379 / NBRC 103807 / OttBd1), this protein is Recombination protein RecR.